We begin with the raw amino-acid sequence, 242 residues long: 3-deoxy-manno-octulosonate cytidylyltransferase (242 aa).

This sequence belongs to the KdsB family.

It is found in the cytoplasm. The enzyme catalyses 3-deoxy-alpha-D-manno-oct-2-ulosonate + CTP = CMP-3-deoxy-beta-D-manno-octulosonate + diphosphate. The protein operates within nucleotide-sugar biosynthesis; CMP-3-deoxy-D-manno-octulosonate biosynthesis; CMP-3-deoxy-D-manno-octulosonate from 3-deoxy-D-manno-octulosonate and CTP: step 1/1. Its pathway is bacterial outer membrane biogenesis; lipopolysaccharide biosynthesis. In terms of biological role, activates KDO (a required 8-carbon sugar) for incorporation into bacterial lipopolysaccharide in Gram-negative bacteria. This is 3-deoxy-manno-octulosonate cytidylyltransferase from Anaeromyxobacter sp. (strain K).